We begin with the raw amino-acid sequence, 210 residues long: Uracil phosphoribosyltransferase (210 aa).

5-phospho-alpha-D-ribose 1-diphosphate is bound by residues R78, R103, and 130–138 (DPMLATGGS). Uracil contacts are provided by residues I193 and 198-200 (GDA). D199 contacts 5-phospho-alpha-D-ribose 1-diphosphate.

It belongs to the UPRTase family. The cofactor is Mg(2+).

It catalyses the reaction UMP + diphosphate = 5-phospho-alpha-D-ribose 1-diphosphate + uracil. It functions in the pathway pyrimidine metabolism; UMP biosynthesis via salvage pathway; UMP from uracil: step 1/1. With respect to regulation, allosterically activated by GTP. Catalyzes the conversion of uracil and 5-phospho-alpha-D-ribose 1-diphosphate (PRPP) to UMP and diphosphate. In Chromobacterium violaceum (strain ATCC 12472 / DSM 30191 / JCM 1249 / CCUG 213 / NBRC 12614 / NCIMB 9131 / NCTC 9757 / MK), this protein is Uracil phosphoribosyltransferase.